The following is a 398-amino-acid chain: G2/mitotic-specific cyclin-B2 (398 aa).

2 disordered regions span residues Met-1–Ser-26 and Ala-53–Ala-76. Thr-8 carries the phosphothreonine modification. Positions Thr-8–Lys-23 are enriched in polar residues. Positions Asn-55–Asn-69 are enriched in low complexity. Phosphoserine occurs at positions 77 and 92. At Thr-94 the chain carries Phosphothreonine. Phosphoserine occurs at positions 99, 392, and 398.

It belongs to the cyclin family. Cyclin AB subfamily. As to quaternary structure, interacts with the CDK1 protein kinase to form a serine/threonine kinase holoenzyme complex also known as maturation promoting factor (MPF). The cyclin subunit imparts substrate specificity to the complex.

Essential for the control of the cell cycle at the G2/M (mitosis) transition. The sequence is that of G2/mitotic-specific cyclin-B2 (CCNB2) from Bos taurus (Bovine).